Here is a 358-residue protein sequence, read N- to C-terminus: Protein ttm-2 (358 aa).

Belongs to the arrestin family.

In terms of biological role, involved in resistance to B.thuringiensis pore-forming toxin Cry5B downstream of the sek-1 and pmk-1 MAPK kinase pathway. This chain is Protein ttm-2, found in Caenorhabditis elegans.